The sequence spans 231 residues: Adenosylcobinamide-GDP ribazoletransferase (231 aa).

6 helical membrane passes run 29–49 (ICAY…SMKL), 53–73 (NFLW…LFHF), 101–121 (IGPF…YAFL), 126–146 (IDLI…LHFG), 167–187 (LISL…IISL), and 211–231 (DVLG…LSLI).

Belongs to the CobS family. Requires Mg(2+) as cofactor.

It localises to the cell inner membrane. It carries out the reaction alpha-ribazole + adenosylcob(III)inamide-GDP = adenosylcob(III)alamin + GMP + H(+). It catalyses the reaction alpha-ribazole 5'-phosphate + adenosylcob(III)inamide-GDP = adenosylcob(III)alamin 5'-phosphate + GMP + H(+). The protein operates within cofactor biosynthesis; adenosylcobalamin biosynthesis; adenosylcobalamin from cob(II)yrinate a,c-diamide: step 7/7. Joins adenosylcobinamide-GDP and alpha-ribazole to generate adenosylcobalamin (Ado-cobalamin). Also synthesizes adenosylcobalamin 5'-phosphate from adenosylcobinamide-GDP and alpha-ribazole 5'-phosphate. The chain is Adenosylcobinamide-GDP ribazoletransferase from Kosmotoga olearia (strain ATCC BAA-1733 / DSM 21960 / TBF 19.5.1).